The chain runs to 306 residues: UDP-3-O-acyl-N-acetylglucosamine deacetylase (306 aa).

His-81, His-241, and Asp-245 together coordinate Zn(2+). His-268 (proton donor) is an active-site residue.

Belongs to the LpxC family. The cofactor is Zn(2+).

It catalyses the reaction a UDP-3-O-[(3R)-3-hydroxyacyl]-N-acetyl-alpha-D-glucosamine + H2O = a UDP-3-O-[(3R)-3-hydroxyacyl]-alpha-D-glucosamine + acetate. Its pathway is glycolipid biosynthesis; lipid IV(A) biosynthesis; lipid IV(A) from (3R)-3-hydroxytetradecanoyl-[acyl-carrier-protein] and UDP-N-acetyl-alpha-D-glucosamine: step 2/6. Its function is as follows. Catalyzes the hydrolysis of UDP-3-O-myristoyl-N-acetylglucosamine to form UDP-3-O-myristoylglucosamine and acetate, the committed step in lipid A biosynthesis. This Hydrogenovibrio crunogenus (strain DSM 25203 / XCL-2) (Thiomicrospira crunogena) protein is UDP-3-O-acyl-N-acetylglucosamine deacetylase.